We begin with the raw amino-acid sequence, 524 residues long: GMP synthase [glutamine-hydrolyzing] (524 aa).

The 199-residue stretch at 9–207 (RILILDFGSQ…VIHICQCIPN (199 aa)) folds into the Glutamine amidotransferase type-1 domain. The active-site Nucleophile is Cys86. Residues His181 and Glu183 contribute to the active site. The 192-residue stretch at 208-399 (WTTKHIIEDS…LGLPADLIYR (192 aa)) folds into the GMPS ATP-PPase domain. 235-241 (SGGVDSA) contacts ATP.

As to quaternary structure, homodimer.

It catalyses the reaction XMP + L-glutamine + ATP + H2O = GMP + L-glutamate + AMP + diphosphate + 2 H(+). The protein operates within purine metabolism; GMP biosynthesis; GMP from XMP (L-Gln route): step 1/1. Its function is as follows. Catalyzes the synthesis of GMP from XMP. The chain is GMP synthase [glutamine-hydrolyzing] from Coxiella burnetii (strain CbuK_Q154) (Coxiella burnetii (strain Q154)).